The chain runs to 272 residues: uncharacterized protein (272 aa).

An N-terminal signal peptide occupies residues 1 to 22 (MEYIKKIALYMSVLLLIIFIGG). A lipid anchor (N-palmitoyl cysteine) is attached at C23. C23 carries S-diacylglycerol cysteine lipidation.

The protein belongs to the staphylococcal tandem lipoprotein family.

The protein localises to the cell membrane. This is an uncharacterized protein from Staphylococcus aureus (strain MRSA252).